A 475-amino-acid polypeptide reads, in one-letter code: MAKKIKDDADKNAETTKKEVLLEAKEEIHKLRNEFERESRERRNELQRVERRLMQKEESLDKKSETLEQKDDRLSRKLRDLETKEEEIKLLYNKEVQKLEELSGLTSQQARELLLSDVEKEVKYEAAMMVKDIETKAKDDADKKAREIITLAIQKCAADHVAETTVTVVQLPNDEMKGRIIGREGRNIRTLETLTGIDLIIDDTPEAVILSGFDPIRREVARIALEKLIADGRIHPARIEEMVEKAKKEVENILKEEGEQATFDTGVHGLHPELIRLLGRLKYRTSYGQNVLKHAIEVSHLAGLMATELGADPKLAKRAGLLHDIGKAVDHEVEGTHIEIGMELLRKYKETKDVIHAMSTHHGDFEPETIEAILVTAADAISAARPGARRETLESYIKRLEKLEDIANNYDGVEKSFAIQAGREIRIIVKPEVYNDDEIYMFAREITKKIEADLEYPGQIKVNVIRETRAIEYAK.

A disordered region spans residues 34 to 73 (EFERESRERRNELQRVERRLMQKEESLDKKSETLEQKDDR). One can recognise a KH domain in the interval 165–228 (TVTVVQLPND…EVARIALEKL (64 aa)). Residues 291–384 (VLKHAIEVSH…VTAADAISAA (94 aa)) enclose the HD domain.

It belongs to the RNase Y family.

Its function is as follows. Endoribonuclease that initiates mRNA decay. The polypeptide is Ribonuclease Y (Alkaliphilus metalliredigens (strain QYMF)).